The sequence spans 270 residues: Aliphatic sulfonates import ATP-binding protein SsuB 1 (270 aa).

Positions valine 18–isoleucine 232 constitute an ABC transporter domain. Position 50–57 (glycine 50–threonine 57) interacts with ATP. The disordered stretch occupies residues proline 247–arginine 270. The segment covering proline 251–serine 261 has biased composition (polar residues).

Belongs to the ABC transporter superfamily. Aliphatic sulfonates importer (TC 3.A.1.17.2) family. In terms of assembly, the complex is composed of two ATP-binding proteins (SsuB), two transmembrane proteins (SsuC) and a solute-binding protein (SsuA).

It is found in the cell inner membrane. The enzyme catalyses ATP + H2O + aliphatic sulfonate-[sulfonate-binding protein]Side 1 = ADP + phosphate + aliphatic sulfonateSide 2 + [sulfonate-binding protein]Side 1.. Functionally, part of the ABC transporter complex SsuABC involved in aliphatic sulfonates import. Responsible for energy coupling to the transport system. The polypeptide is Aliphatic sulfonates import ATP-binding protein SsuB 1 (Pseudomonas syringae pv. tomato (strain ATCC BAA-871 / DC3000)).